The sequence spans 443 residues: ATP-dependent protease ATPase subunit HslU (443 aa).

ATP is bound by residues Ile-20, 62–67 (GVGKTE), Asp-255, Glu-321, and Arg-393.

The protein belongs to the ClpX chaperone family. HslU subfamily. In terms of assembly, a double ring-shaped homohexamer of HslV is capped on each side by a ring-shaped HslU homohexamer. The assembly of the HslU/HslV complex is dependent on binding of ATP.

The protein localises to the cytoplasm. Functionally, ATPase subunit of a proteasome-like degradation complex; this subunit has chaperone activity. The binding of ATP and its subsequent hydrolysis by HslU are essential for unfolding of protein substrates subsequently hydrolyzed by HslV. HslU recognizes the N-terminal part of its protein substrates and unfolds these before they are guided to HslV for hydrolysis. The sequence is that of ATP-dependent protease ATPase subunit HslU from Helicobacter acinonychis (strain Sheeba).